The chain runs to 83 residues: Exodeoxyribonuclease 7 small subunit (83 aa).

It belongs to the XseB family. Heterooligomer composed of large and small subunits.

Its subcellular location is the cytoplasm. It catalyses the reaction Exonucleolytic cleavage in either 5'- to 3'- or 3'- to 5'-direction to yield nucleoside 5'-phosphates.. Bidirectionally degrades single-stranded DNA into large acid-insoluble oligonucleotides, which are then degraded further into small acid-soluble oligonucleotides. The sequence is that of Exodeoxyribonuclease 7 small subunit from Heliobacterium modesticaldum (strain ATCC 51547 / Ice1).